The chain runs to 252 residues: 5-oxoprolinase subunit A (252 aa).

This sequence belongs to the LamB/PxpA family. As to quaternary structure, forms a complex composed of PxpA, PxpB and PxpC.

The enzyme catalyses 5-oxo-L-proline + ATP + 2 H2O = L-glutamate + ADP + phosphate + H(+). Its function is as follows. Catalyzes the cleavage of 5-oxoproline to form L-glutamate coupled to the hydrolysis of ATP to ADP and inorganic phosphate. This Bordetella pertussis (strain Tohama I / ATCC BAA-589 / NCTC 13251) protein is 5-oxoprolinase subunit A.